A 901-amino-acid chain; its full sequence is Protein translocase subunit SecA (901 aa).

Residues glutamine 87, 105–109 (GEGKT), and aspartate 512 contribute to the ATP site. Zn(2+)-binding residues include cysteine 885, cysteine 887, cysteine 896, and histidine 897.

It belongs to the SecA family. In terms of assembly, monomer and homodimer. Part of the essential Sec protein translocation apparatus which comprises SecA, SecYEG and auxiliary proteins SecDF-YajC and YidC. Requires Zn(2+) as cofactor.

Its subcellular location is the cell inner membrane. The protein localises to the cytoplasm. It catalyses the reaction ATP + H2O + cellular proteinSide 1 = ADP + phosphate + cellular proteinSide 2.. Part of the Sec protein translocase complex. Interacts with the SecYEG preprotein conducting channel. Has a central role in coupling the hydrolysis of ATP to the transfer of proteins into and across the cell membrane, serving both as a receptor for the preprotein-SecB complex and as an ATP-driven molecular motor driving the stepwise translocation of polypeptide chains across the membrane. The polypeptide is Protein translocase subunit SecA (Salmonella typhi).